Consider the following 432-residue polypeptide: Tol-Pal system protein TolB (432 aa).

A signal peptide spans 1 to 22; it reads MMFKKCLSVLFTCLIFISSARA.

Belongs to the TolB family. In terms of assembly, the Tol-Pal system is composed of five core proteins: the inner membrane proteins TolA, TolQ and TolR, the periplasmic protein TolB and the outer membrane protein Pal. They form a network linking the inner and outer membranes and the peptidoglycan layer.

The protein localises to the periplasm. Functionally, part of the Tol-Pal system, which plays a role in outer membrane invagination during cell division and is important for maintaining outer membrane integrity. This chain is Tol-Pal system protein TolB, found in Marinomonas sp. (strain MWYL1).